We begin with the raw amino-acid sequence, 283 residues long: MEMO1 family protein MK0963 (283 aa).

Belongs to the MEMO1 family.

This is MEMO1 family protein MK0963 from Methanopyrus kandleri (strain AV19 / DSM 6324 / JCM 9639 / NBRC 100938).